The sequence spans 418 residues: eIF5-mimic protein 2 (418 aa).

The span at 1-14 shows a compositional bias: polar residues; the sequence is MNQKQQKPTLSGQR. A disordered region spans residues 1–25; the sequence is MNQKQQKPTLSGQRFKTRKRDEKER. A W2 domain is found at 246-413; that stretch reads NQQTIGARKE…KNAEEESESE (168 aa).

It belongs to the BZW family.

In terms of biological role, translation initiation regulator which may repress repeat-associated non-AUG (RAN) initiated translation probably by acting as a competitive inhibitor of eukaryotic translation initiation factor 5 (EIF5) function. Enhances histone H4 gene transcription but does not seem to bind DNA directly. In Gallus gallus (Chicken), this protein is eIF5-mimic protein 2 (BZW1).